A 404-amino-acid polypeptide reads, in one-letter code: Tryptophan synthase beta chain (404 aa).

At Lys-98 the chain carries N6-(pyridoxal phosphate)lysine.

This sequence belongs to the TrpB family. In terms of assembly, tetramer of two alpha and two beta chains. Pyridoxal 5'-phosphate serves as cofactor.

It carries out the reaction (1S,2R)-1-C-(indol-3-yl)glycerol 3-phosphate + L-serine = D-glyceraldehyde 3-phosphate + L-tryptophan + H2O. The protein operates within amino-acid biosynthesis; L-tryptophan biosynthesis; L-tryptophan from chorismate: step 5/5. In terms of biological role, the beta subunit is responsible for the synthesis of L-tryptophan from indole and L-serine. The protein is Tryptophan synthase beta chain of Acidiphilium cryptum (strain JF-5).